Consider the following 123-residue polypeptide: Large ribosomal subunit protein uL18 (123 aa).

This sequence belongs to the universal ribosomal protein uL18 family. Part of the 50S ribosomal subunit; part of the 5S rRNA/L5/L18/L25 subcomplex. Contacts the 5S and 23S rRNAs.

Its function is as follows. This is one of the proteins that bind and probably mediate the attachment of the 5S RNA into the large ribosomal subunit, where it forms part of the central protuberance. This is Large ribosomal subunit protein uL18 from Protochlamydia amoebophila (strain UWE25).